Consider the following 404-residue polypeptide: Cysteine desulfurase IscS (404 aa).

Residues 75–76 (AT), Asn155, Gln183, and 203–205 (SGH) contribute to the pyridoxal 5'-phosphate site. Residue Lys206 is modified to N6-(pyridoxal phosphate)lysine. Thr243 serves as a coordination point for pyridoxal 5'-phosphate. Cys328 serves as the catalytic Cysteine persulfide intermediate. [2Fe-2S] cluster is bound at residue Cys328.

The protein belongs to the class-V pyridoxal-phosphate-dependent aminotransferase family. NifS/IscS subfamily. In terms of assembly, homodimer. Forms a heterotetramer with IscU, interacts with other sulfur acceptors. It depends on pyridoxal 5'-phosphate as a cofactor.

The protein resides in the cytoplasm. The catalysed reaction is (sulfur carrier)-H + L-cysteine = (sulfur carrier)-SH + L-alanine. Its pathway is cofactor biosynthesis; iron-sulfur cluster biosynthesis. Master enzyme that delivers sulfur to a number of partners involved in Fe-S cluster assembly, tRNA modification or cofactor biosynthesis. Catalyzes the removal of elemental sulfur atoms from cysteine to produce alanine. Functions as a sulfur delivery protein for Fe-S cluster synthesis onto IscU, an Fe-S scaffold assembly protein, as well as other S acceptor proteins. The polypeptide is Cysteine desulfurase IscS (Shewanella frigidimarina (strain NCIMB 400)).